Reading from the N-terminus, the 375-residue chain is Anhydro-N-acetylmuramic acid kinase 1 (375 aa).

20–27 (GTSFDGVD) contributes to the ATP binding site. A disordered region spans residues 351–375 (APSTTGVAAPVGGGRRSKPGARELS).

The protein belongs to the anhydro-N-acetylmuramic acid kinase family.

The enzyme catalyses 1,6-anhydro-N-acetyl-beta-muramate + ATP + H2O = N-acetyl-D-muramate 6-phosphate + ADP + H(+). The protein operates within amino-sugar metabolism; 1,6-anhydro-N-acetylmuramate degradation. It participates in cell wall biogenesis; peptidoglycan recycling. Its function is as follows. Catalyzes the specific phosphorylation of 1,6-anhydro-N-acetylmuramic acid (anhMurNAc) with the simultaneous cleavage of the 1,6-anhydro ring, generating MurNAc-6-P. Is required for the utilization of anhMurNAc either imported from the medium or derived from its own cell wall murein, and thus plays a role in cell wall recycling. This Jannaschia sp. (strain CCS1) protein is Anhydro-N-acetylmuramic acid kinase 1.